Consider the following 329-residue polypeptide: N-acetyl-gamma-glutamyl-phosphate reductase (329 aa).

The active site involves Cys155.

This sequence belongs to the NAGSA dehydrogenase family. Type 1 subfamily.

It localises to the cytoplasm. It catalyses the reaction N-acetyl-L-glutamate 5-semialdehyde + phosphate + NADP(+) = N-acetyl-L-glutamyl 5-phosphate + NADPH + H(+). Its pathway is amino-acid biosynthesis; L-arginine biosynthesis; N(2)-acetyl-L-ornithine from L-glutamate: step 3/4. Functionally, catalyzes the NADPH-dependent reduction of N-acetyl-5-glutamyl phosphate to yield N-acetyl-L-glutamate 5-semialdehyde. This chain is N-acetyl-gamma-glutamyl-phosphate reductase, found in Shewanella pealeana (strain ATCC 700345 / ANG-SQ1).